Here is a 299-residue protein sequence, read N- to C-terminus: Cycloserine biosynthesis protein DcsG (299 aa).

Residues Lys92, Lys137, Ser144, Gln175, Pro176, and Val178 each contribute to the ATP site. Residues 95-298 (LADLAAHGVP…FAQALAERLK (204 aa)) enclose the ATP-grasp domain. Residues Arg220 and Arg254 contribute to the active site. The Mg(2+) site is built by Glu269 and Glu271. Glu271 is a catalytic residue.

Monomer. Mg(2+) serves as cofactor.

The catalysed reaction is O-ureido-D-serine + ATP + H2O + H(+) = D-cycloserine + NH4(+) + ADP + phosphate + CO2. Involved in the biosynthesis of the antibiotic D-cycloserine (DCS), a cyclic structural analog of D-alanine, used as an antitubercular agent. Catalyzes the synthesis of D-cycloserine from O-ureido-D-serine (D-OUS). It reacts with D-OUS, D-homocysteine and beta-aminooxy-D-alanine. This is Cycloserine biosynthesis protein DcsG from Streptomyces lavendulae.